The chain runs to 149 residues: uncharacterized protein (149 aa).

A helical transmembrane segment spans residues 12–31; that stretch reads FKNLVIGAVSGVAAAYFLST.

Its subcellular location is the membrane. This is an uncharacterized protein from Streptococcus pyogenes serotype M6 (strain ATCC BAA-946 / MGAS10394).